The following is a 58-amino-acid chain: Large ribosomal subunit protein uL30 (58 aa).

Belongs to the universal ribosomal protein uL30 family. As to quaternary structure, part of the 50S ribosomal subunit.

The protein is Large ribosomal subunit protein uL30 of Wigglesworthia glossinidia brevipalpis.